Reading from the N-terminus, the 142-residue chain is Hemoglobin subunit alpha (142 aa).

Residues valine 1–arginine 142 enclose the Globin domain. Residue serine 3 is modified to Phosphoserine. N6-succinyllysine is present on residues lysine 7 and lysine 11. An N6-acetyllysine; alternate modification is found at lysine 16. Position 16 is an N6-succinyllysine; alternate (lysine 16). Tyrosine 24 carries the post-translational modification Phosphotyrosine. Serine 35 carries the phosphoserine modification. An N6-succinyllysine modification is found at lysine 40. Histidine 58 contributes to the O2 binding site. Residue histidine 87 coordinates heme b. Serine 102 is modified (phosphoserine). Position 108 is a phosphothreonine (threonine 108). A Phosphoserine modification is found at serine 125. Phosphothreonine is present on residues threonine 135 and threonine 138. Serine 139 is modified (phosphoserine).

The protein belongs to the globin family. In terms of assembly, heterotetramer of two alpha chains and two beta chains. Red blood cells.

Involved in oxygen transport from the lung to the various peripheral tissues. Functionally, hemopressin acts as an antagonist peptide of the cannabinoid receptor CNR1. Hemopressin-binding efficiently blocks cannabinoid receptor CNR1 and subsequent signaling. This chain is Hemoglobin subunit alpha (HBA), found in Procavia capensis habessinica (Abyssinian hyrax).